Here is a 520-residue protein sequence, read N- to C-terminus: Cytochrome P450 315a1, mitochondrial (520 aa).

Cys466 lines the heme pocket.

It belongs to the cytochrome P450 family. Requires heme as cofactor. As to expression, complex coexpression pattern of dib (disembodied) and sad (shade) in the early embryo that restricts to the prothoracic gland cells of the developing ring gland during late embryogenesis. In larvae and adult, coexpression is seen in prothoracic gland and follicle cells of the ovary. In adults, coexpression is seen in the follicle cells, sad only is expressed in nurse cells.

Its subcellular location is the mitochondrion membrane. The catalysed reaction is 2-deoxyecdysone + 2 reduced [adrenodoxin] + O2 + 2 H(+) = ecdysone + 2 oxidized [adrenodoxin] + H2O. It carries out the reaction 2,22-dideoxyecdysone + 2 reduced [adrenodoxin] + O2 + 2 H(+) = 22-deoxyecdysone + 2 oxidized [adrenodoxin] + H2O. Its pathway is steroid biosynthesis; ecdysteroid biosynthesis. Required for CNS development: midline glial cells. Involved in the metabolism of insect hormones: responsible for ecdysteroid C2-hydroxylase activity. May be involved in the breakdown of synthetic insecticides. The sequence is that of Cytochrome P450 315a1, mitochondrial from Drosophila melanogaster (Fruit fly).